A 286-amino-acid chain; its full sequence is MALSRLLSTLKSKVLYDDLSEESQKRVDNKNRKSLALSKRPLNQGRVTIDQAATMLGLEPFSFSDVKVNKYDMFIAKQDYSVKAHRKATFNILVDPYWFHQPLTHYPFFRVETFAMVWIGIKGRASGITTLRIIDKSYVNPSDQVEVEVRYPISKNFAVLGSLANFLALEDKHNLQVSVSVDDSSVQNCVISRTLWFWGIERTDLPVSMKTNDTVMFEFEPLEDKAINHLSSFSNFTTNVVQKAVGGAFTSKSFPELDTEKEFGVVKQPKKIPITKKSKSEVSVIM.

This sequence belongs to the tenuiviruses pc4 protein family. In terms of assembly, interacts with the rice proteins DJA6 and HSP17.9A.

The protein localises to the host cytoplasm. Functionally, transports viral genome to neighboring plant cells directly through plasmosdesmata, without any budding. The movement protein allows efficient cell to cell propagation, by bypassing the host cell wall barrier. In Avena sativa (Oat), this protein is Movement protein.